The following is a 338-amino-acid chain: Replication factor C small subunit (338 aa).

An ATP-binding site is contributed by 53–60; it reads GPPGVGKT.

Belongs to the activator 1 small subunits family. RfcS subfamily. As to quaternary structure, heteromultimer composed of small subunits (RfcS) and large subunits (RfcL).

Part of the RFC clamp loader complex which loads the PCNA sliding clamp onto DNA. This chain is Replication factor C small subunit, found in Methanosarcina mazei (strain ATCC BAA-159 / DSM 3647 / Goe1 / Go1 / JCM 11833 / OCM 88) (Methanosarcina frisia).